Consider the following 507-residue polypeptide: MKRALLSVSDKTGLVSFAKGLIDRGFELVSTGGTHRELAAAGIAVTSVEEVTGFPEMLDGRVKTLHPKIHAGILARRDDPDHMEALANHDIQPVDLVCVNLYPFAATIKRPDVTRAEAIEQIDIGGPSALRAAAKNSDSVWAVVDPADYEAVLTGLDQDDAHLRQKLAAKVFAITAAYDAQIVHYLDPEPFPEHFTPTYTKRQDLRYGENSHQQAAFYVEPDPNPTSLAAAKQLHGKELSYNNIKDADAALAMLREFSEPAVVAVKHMNPCGIGLGKTIEGAWDKAYAADPMSIFGGIIALNRPVDLATAEKMHKLFLEIIIAPAFDDDAYAVLAKKKNVRLLTINTADTPAELGTETTAIYGGLLIQTRDNQTETPADMTVVTTVKPTDEQLKALAFAQTVVKHVKSNAIVVAQADQTLGIGAGQMNRIGSVELALTQAQQNDNFAGAVMASDAFFPMDDCVDYAAKHDIKAIIQPGGSIRDKDSIEKANQYGIAMVTTGVRHFRH.

Positions 1 to 144 (MKRALLSVSD…KNSDSVWAVV (144 aa)) constitute an MGS-like domain.

It belongs to the PurH family.

It carries out the reaction (6R)-10-formyltetrahydrofolate + 5-amino-1-(5-phospho-beta-D-ribosyl)imidazole-4-carboxamide = 5-formamido-1-(5-phospho-D-ribosyl)imidazole-4-carboxamide + (6S)-5,6,7,8-tetrahydrofolate. The enzyme catalyses IMP + H2O = 5-formamido-1-(5-phospho-D-ribosyl)imidazole-4-carboxamide. The protein operates within purine metabolism; IMP biosynthesis via de novo pathway; 5-formamido-1-(5-phospho-D-ribosyl)imidazole-4-carboxamide from 5-amino-1-(5-phospho-D-ribosyl)imidazole-4-carboxamide (10-formyl THF route): step 1/1. Its pathway is purine metabolism; IMP biosynthesis via de novo pathway; IMP from 5-formamido-1-(5-phospho-D-ribosyl)imidazole-4-carboxamide: step 1/1. The protein is Bifunctional purine biosynthesis protein PurH of Lacticaseibacillus casei (strain BL23) (Lactobacillus casei).